A 314-amino-acid polypeptide reads, in one-letter code: MNMTATIQLKGKDFLTLADYSKEEIEYLLHLAVELKEKQQNGERYTPLSGKTLAMIFEKPSTRTRVSFEVGMVQLGGHALHLSSRDLQIGRGETIADTARVLSEYVDAIMIRTFEHEKVEELAHYATIPVINGLTDDDHPCQALADLLTIYEVKGKLQGLKLAYIGDGNNMAHALMLAAAKVGMHCAVASPKGYEPKEAVVKEAKQIANESGATIVVTNDPYEAIADADVVYTDVWASMGQEAEANERMHVFAPFQVNEALVQQAKQDFMFLHCLPAHRGEEVTEGVIDGVRSYIFQQAGNRLHAQKALLVSLL.

Carbamoyl phosphate contacts are provided by residues 61–64, Q88, R112, and 139–142; these read STRT and HPCQ. Residues N170, D234, and 238–239 each bind L-ornithine; that span reads SM. Carbamoyl phosphate is bound by residues 274–275 and R302; that span reads CL.

This sequence belongs to the aspartate/ornithine carbamoyltransferase superfamily. OTCase family.

It localises to the cytoplasm. The enzyme catalyses carbamoyl phosphate + L-ornithine = L-citrulline + phosphate + H(+). It functions in the pathway amino-acid biosynthesis; L-arginine biosynthesis; L-arginine from L-ornithine and carbamoyl phosphate: step 1/3. Functionally, reversibly catalyzes the transfer of the carbamoyl group from carbamoyl phosphate (CP) to the N(epsilon) atom of ornithine (ORN) to produce L-citrulline. This Anoxybacillus flavithermus (strain DSM 21510 / WK1) protein is Ornithine carbamoyltransferase.